A 218-amino-acid polypeptide reads, in one-letter code: Riboflavin kinase (218 aa).

An N-terminal signal peptide occupies residues 1–19 (MFTWTIYVSLLLVLAGTFL). 2 residues coordinate Mg(2+): Thr-72 and Asn-74. The active-site Nucleophile is the Glu-155.

This sequence belongs to the flavokinase family. The cofactor is Zn(2+). Mg(2+) is required as a cofactor.

The protein resides in the microsome. The protein localises to the mitochondrion inner membrane. It is found in the endoplasmic reticulum. The enzyme catalyses riboflavin + ATP = FMN + ADP + H(+). The protein operates within cofactor biosynthesis; FMN biosynthesis; FMN from riboflavin (ATP route): step 1/1. Functionally, catalyzes the phosphorylation of riboflavin (vitamin B2) to form flavin mononucleotide (FMN) coenzyme. This Saccharomyces cerevisiae (strain ATCC 204508 / S288c) (Baker's yeast) protein is Riboflavin kinase (FMN1).